Consider the following 499-residue polypeptide: Tektin-like protein 1 (499 aa).

Serine 14 carries the phosphoserine modification. Positions 201-225 (WEKKELKSMKRKMEKDMEISEDLLK) form a coiled coil. The disordered stretch occupies residues 265 to 286 (VDITRPPTPRTQGLKTPPPDPI). A coiled-coil region spans residues 308 to 328 (KDILTEMAKNEVDIQNQQQEI). Residue tyrosine 372 is modified to Phosphotyrosine.

Microtubule inner protein component of sperm flagellar doublet microtubules.

It localises to the cytoplasm. The protein resides in the cytoskeleton. It is found in the flagellum axoneme. Its function is as follows. Microtubule inner protein (MIP) part of the dynein-decorated doublet microtubules (DMTs) in sperm flagellar axoneme, which is required for motile flagellum beating. Forms an extensive interaction network cross-linking the lumen of axonemal doublet microtubules. This Mus musculus (Mouse) protein is Tektin-like protein 1.